The following is a 263-amino-acid chain: Orotidine 5'-phosphate decarboxylase (263 aa).

Residues aspartate 38, 60 to 62 (KTH), 91 to 100 (DRKFADIGNT), tyrosine 213, and arginine 232 each bind substrate. Residue lysine 93 is the Proton donor of the active site.

The protein belongs to the OMP decarboxylase family.

It catalyses the reaction orotidine 5'-phosphate + H(+) = UMP + CO2. It participates in pyrimidine metabolism; UMP biosynthesis via de novo pathway; UMP from orotate: step 2/2. This Rhizomucor pusillus protein is Orotidine 5'-phosphate decarboxylase (PYR4).